The primary structure comprises 365 residues: Class I histocompatibility antigen, Gogo-A*0101 alpha chain (365 aa).

The signal sequence occupies residues 1-24 (MAVMAPRTLVLLLSGALALTQTWA). Residues 25 to 114 (GSHSMRYFST…LRGYYNQSED (90 aa)) are alpha-1. The Extracellular portion of the chain corresponds to 25-308 (GSHSMRYFST…EPSSQPTIPI (284 aa)). The N-linked (GlcNAc...) asparagine glycan is linked to N110. Positions 115-206 (GSHTIQRMYG…ENGKETLQRT (92 aa)) are alpha-2. Intrachain disulfides connect C125–C188 and C227–C283. The alpha-3 stretch occupies residues 207–298 (DAPKTHMTHH…GLPEPLTLRW (92 aa)). The region spanning 209–297 (PKTHMTHHAV…EGLPEPLTLR (89 aa)) is the Ig-like C1-type domain. The tract at residues 299-308 (EPSSQPTIPI) is connecting peptide. The helical transmembrane segment at 309-332 (VGIIAGLVLFGAVIAGAVVAAVRW) threads the bilayer. Topologically, residues 333–365 (RRKSSDRKGGSYSQAASSDSAQGSDVSLTACKV) are cytoplasmic. The interval 338-365 (DRKGGSYSQAASSDSAQGSDVSLTACKV) is disordered. A compositionally biased stretch (low complexity) spans 342–359 (GSYSQAASSDSAQGSDVS). A Phosphoserine modification is found at S343. Y344 carries the post-translational modification Phosphotyrosine. S345, S349, S350, S352, S356, and S359 each carry phosphoserine.

Belongs to the MHC class I family. In terms of assembly, heterodimer of an alpha chain and a beta chain (beta-2-microglobulin).

It localises to the membrane. Functionally, involved in the presentation of foreign antigens to the immune system. In Gorilla gorilla gorilla (Western lowland gorilla), this protein is Class I histocompatibility antigen, Gogo-A*0101 alpha chain.